We begin with the raw amino-acid sequence, 261 residues long: Carnitinyl-CoA dehydratase (261 aa).

Glu111 serves as the catalytic Nucleophile. Glu131 (proton acceptor) is an active-site residue.

Belongs to the enoyl-CoA hydratase/isomerase family.

It catalyses the reaction (R)-carnitinyl-CoA = crotonobetainyl-CoA + H2O. Its pathway is amine and polyamine metabolism; carnitine metabolism. Functionally, catalyzes the reversible dehydration of L-carnitinyl-CoA to crotonobetainyl-CoA. In Salmonella arizonae (strain ATCC BAA-731 / CDC346-86 / RSK2980), this protein is Carnitinyl-CoA dehydratase.